Reading from the N-terminus, the 436-residue chain is Glutamate-1-semialdehyde 2,1-aminomutase (436 aa).

N6-(pyridoxal phosphate)lysine is present on K272.

This sequence belongs to the class-III pyridoxal-phosphate-dependent aminotransferase family. HemL subfamily. In terms of assembly, homodimer. The cofactor is pyridoxal 5'-phosphate.

It is found in the cytoplasm. The catalysed reaction is (S)-4-amino-5-oxopentanoate = 5-aminolevulinate. Its pathway is porphyrin-containing compound metabolism; protoporphyrin-IX biosynthesis; 5-aminolevulinate from L-glutamyl-tRNA(Glu): step 2/2. The protein operates within porphyrin-containing compound metabolism; chlorophyll biosynthesis. This Methylibium petroleiphilum (strain ATCC BAA-1232 / LMG 22953 / PM1) protein is Glutamate-1-semialdehyde 2,1-aminomutase.